The following is a 323-amino-acid chain: HPr kinase/phosphorylase (323 aa).

Residues H142 and K163 contribute to the active site. 157 to 164 (GESGVGKS) is a binding site for ATP. Mg(2+) is bound at residue S164. D181 serves as the catalytic Proton acceptor; for phosphorylation activity. Proton donor; for dephosphorylation activity. The segment at 205–214 (LEVRGLGMLN) is important for the catalytic mechanism of both phosphorylation and dephosphorylation. E206 provides a ligand contact to Mg(2+). R249 is an active-site residue. Positions 270-275 (PVAAGR) are important for the catalytic mechanism of dephosphorylation.

This sequence belongs to the HPrK/P family. As to quaternary structure, homohexamer. The cofactor is Mg(2+).

It catalyses the reaction [HPr protein]-L-serine + ATP = [HPr protein]-O-phospho-L-serine + ADP + H(+). The catalysed reaction is [HPr protein]-O-phospho-L-serine + phosphate + H(+) = [HPr protein]-L-serine + diphosphate. In terms of biological role, catalyzes the ATP- as well as the pyrophosphate-dependent phosphorylation of a specific serine residue in HPr, a phosphocarrier protein of the phosphoenolpyruvate-dependent sugar phosphotransferase system (PTS). HprK/P also catalyzes the pyrophosphate-producing, inorganic phosphate-dependent dephosphorylation (phosphorolysis) of seryl-phosphorylated HPr (P-Ser-HPr). This Nitrosomonas europaea (strain ATCC 19718 / CIP 103999 / KCTC 2705 / NBRC 14298) protein is HPr kinase/phosphorylase.